The chain runs to 204 residues: Large ribosomal subunit protein eL15 (204 aa).

Belongs to the eukaryotic ribosomal protein eL15 family. As to quaternary structure, component of the large ribosomal subunit.

The protein localises to the cytoplasm. Component of the large ribosomal subunit. The ribosome is a large ribonucleoprotein complex responsible for the synthesis of proteins in the cell. This is Large ribosomal subunit protein eL15 (rpl15) from Megalobrama amblycephala (Chinese blunt snout bream).